The primary structure comprises 263 residues: 3'-5' ssDNA/RNA exonuclease TatD (263 aa).

A divalent metal cation is bound by residues glutamate 91, histidine 127, and histidine 152.

Belongs to the metallo-dependent hydrolases superfamily. TatD-type hydrolase family. TatD subfamily. As to quaternary structure, monomer. It depends on Mg(2+) as a cofactor.

The protein resides in the cytoplasm. Functionally, 3'-5' exonuclease that prefers single-stranded DNA and RNA. May play a role in the H(2)O(2)-induced DNA damage repair. This is 3'-5' ssDNA/RNA exonuclease TatD from Citrobacter rodentium (strain ICC168) (Citrobacter freundii biotype 4280).